A 434-amino-acid chain; its full sequence is 4-hydroxy-3-methylbut-2-en-1-yl diphosphate synthase (flavodoxin) (434 aa).

Polar residues predominate over residues 1–15; the sequence is MQSEAQSPRSSQICS. The disordered stretch occupies residues 1 to 24; the sequence is MQSEAQSPRSSQICSTEPVFGGHQ. Cysteine 322, cysteine 325, cysteine 368, and glutamate 375 together coordinate [4Fe-4S] cluster.

It belongs to the IspG family. [4Fe-4S] cluster is required as a cofactor.

It carries out the reaction (2E)-4-hydroxy-3-methylbut-2-enyl diphosphate + oxidized [flavodoxin] + H2O + 2 H(+) = 2-C-methyl-D-erythritol 2,4-cyclic diphosphate + reduced [flavodoxin]. It participates in isoprenoid biosynthesis; isopentenyl diphosphate biosynthesis via DXP pathway; isopentenyl diphosphate from 1-deoxy-D-xylulose 5-phosphate: step 5/6. Converts 2C-methyl-D-erythritol 2,4-cyclodiphosphate (ME-2,4cPP) into 1-hydroxy-2-methyl-2-(E)-butenyl 4-diphosphate. The polypeptide is 4-hydroxy-3-methylbut-2-en-1-yl diphosphate synthase (flavodoxin) (Burkholderia cenocepacia (strain ATCC BAA-245 / DSM 16553 / LMG 16656 / NCTC 13227 / J2315 / CF5610) (Burkholderia cepacia (strain J2315))).